The chain runs to 710 residues: Polyribonucleotide nucleotidyltransferase (710 aa).

Positions 501 and 507 each coordinate Mg(2+). The 61-residue stretch at 568 to 628 folds into the KH domain; that stretch reads PKVQMFQIKP…ETVKQAILFI (61 aa). One can recognise an S1 motif domain in the interval 638-710; that stretch reads NSIYHAHISR…RIDFVLISKK (73 aa).

It belongs to the polyribonucleotide nucleotidyltransferase family. Mg(2+) serves as cofactor.

Its subcellular location is the cytoplasm. The catalysed reaction is RNA(n+1) + phosphate = RNA(n) + a ribonucleoside 5'-diphosphate. Functionally, involved in mRNA degradation. Catalyzes the phosphorolysis of single-stranded polyribonucleotides processively in the 3'- to 5'-direction. The polypeptide is Polyribonucleotide nucleotidyltransferase (Phytoplasma australiense).